Here is a 433-residue protein sequence, read N- to C-terminus: Serine hydroxymethyltransferase (433 aa).

122–124 (AHV) provides a ligand contact to (6S)-5,6,7,8-tetrahydrofolate. Lysine 228 carries the N6-(pyridoxal phosphate)lysine modification.

Belongs to the SHMT family. As to quaternary structure, homodimer. The cofactor is pyridoxal 5'-phosphate.

Its subcellular location is the cytoplasm. Its pathway is amino-acid biosynthesis; glycine biosynthesis; glycine from L-serine: step 1/1. Catalyzes the reversible interconversion of serine and glycine with a modified folate serving as the one-carbon carrier. Also exhibits a pteridine-independent aldolase activity toward beta-hydroxyamino acids, producing glycine and aldehydes, via a retro-aldol mechanism. This Sulfolobus acidocaldarius (strain ATCC 33909 / DSM 639 / JCM 8929 / NBRC 15157 / NCIMB 11770) protein is Serine hydroxymethyltransferase.